Consider the following 267-residue polypeptide: MLKIAMIGCGAIGASVLELLHGDSDVVVDRVITVPEARDRTEIAVARWAPRARVLEVLAADDAPDLVVECAGHGAIAAHVVPALERGIPCVVTSVGALSAPGMAQLLEQAARRGKTQVQLLSGAIGGIDALAAARVGGLDSVVYTGRKPPMAWKGTPAEAVCDLDSLTVAHCIFDGSAEQAAQLYPKNANVAATLSLAGLGLKRTQVQLFADPGVSENVHHVAAHGAFGSFELTMRGRPLAANPKTSALTVYSVVRALLNRGRALVI.

Residues Ala124 and Asn190 each coordinate NAD(+). The active site involves His220.

It belongs to the L-aspartate dehydrogenase family.

The catalysed reaction is L-aspartate + NADP(+) + H2O = oxaloacetate + NH4(+) + NADPH + H(+). It carries out the reaction L-aspartate + NAD(+) + H2O = oxaloacetate + NH4(+) + NADH + H(+). It functions in the pathway cofactor biosynthesis; NAD(+) biosynthesis; iminoaspartate from L-aspartate (dehydrogenase route): step 1/1. Its function is as follows. Specifically catalyzes the NAD or NADP-dependent dehydrogenation of L-aspartate to iminoaspartate. The chain is L-aspartate dehydrogenase from Polaromonas sp. (strain JS666 / ATCC BAA-500).